A 540-amino-acid polypeptide reads, in one-letter code: CTP synthase (540 aa).

Residues 1 to 266 are amidoligase domain; sequence MAVKYIFVTG…LTPIARHLEL (266 aa). Ser-14 contacts CTP. UTP is bound at residue Ser-14. ATP contacts are provided by residues 15–20 and Asp-72; that span reads SLGKGI. Positions 72 and 140 each coordinate Mg(2+). Residues 147–149, 187–192, and Lys-223 contribute to the CTP site; these read DIE and KTKPTQ. Residues 187-192 and Lys-223 contribute to the UTP site; that span reads KTKPTQ. The Glutamine amidotransferase type-1 domain maps to 291-540; sequence TIGFVGKYLS…VKETLAHKKT (250 aa). Gly-351 contributes to the L-glutamine binding site. Cys-378 functions as the Nucleophile; for glutamine hydrolysis in the catalytic mechanism. Residues 379–382, Glu-402, and Arg-470 each bind L-glutamine; that span reads LGMQ. Active-site residues include His-513 and Glu-515.

The protein belongs to the CTP synthase family. In terms of assembly, homotetramer.

The catalysed reaction is UTP + L-glutamine + ATP + H2O = CTP + L-glutamate + ADP + phosphate + 2 H(+). It carries out the reaction L-glutamine + H2O = L-glutamate + NH4(+). The enzyme catalyses UTP + NH4(+) + ATP = CTP + ADP + phosphate + 2 H(+). Its pathway is pyrimidine metabolism; CTP biosynthesis via de novo pathway; CTP from UDP: step 2/2. Allosterically activated by GTP, when glutamine is the substrate; GTP has no effect on the reaction when ammonia is the substrate. The allosteric effector GTP functions by stabilizing the protein conformation that binds the tetrahedral intermediate(s) formed during glutamine hydrolysis. Inhibited by the product CTP, via allosteric rather than competitive inhibition. Functionally, catalyzes the ATP-dependent amination of UTP to CTP with either L-glutamine or ammonia as the source of nitrogen. Regulates intracellular CTP levels through interactions with the four ribonucleotide triphosphates. The polypeptide is CTP synthase (Helicobacter hepaticus (strain ATCC 51449 / 3B1)).